We begin with the raw amino-acid sequence, 161 residues long: Cystatin cpi-2 (161 aa).

The N-terminal stretch at 1 to 25 (MMSTMSIKEGLLVILLSLFLFDTTA) is a signal peptide. The Important for interaction with host LGMN motif lies at 76–78 (SND). A glycan (N-linked (GlcNAc...) asparagine) is linked at Asn89. The short motif at 93–97 (QVVAG) is the Secondary area of contact element. Residues Cys111 and Cys124 are joined by a disulfide bond.

This sequence belongs to the cystatin family.

In terms of biological role, cysteine protease inhibitor which inhibits members of the peptidase C1 family. Also acts as an asparaginyl endopeptidase inhibitor. In the human host, inhibits CTSL/cathepsin L, CTSS/cathepsin S, CTSB/cathepsin B and asparaginyl endopeptidase LGMN/AEP which may cause defects in both antigen and MHC class II invariant chain CD74/Ii processing. The polypeptide is Cystatin cpi-2 (Brugia malayi (Filarial nematode worm)).